A 526-amino-acid chain; its full sequence is Cytochrome P450 monooxygenase ucsK (526 aa).

A helical transmembrane segment spans residues 7–27 (PVLAAATAVSFGFYLAGLFVY). Residue Asn403 is glycosylated (N-linked (GlcNAc...) asparagine). Cys467 is a binding site for heme.

This sequence belongs to the cytochrome P450 family. The cofactor is heme.

The protein resides in the membrane. It functions in the pathway mycotoxin biosynthesis. Cytochrome P450 monooxygenase; part of the gene cluster that mediates the biosynthesis of UCS1025A, a member of the pyrrolizidinone family that acts as a strong telomerase inhibitor and displays potent antibacterial and antitumor properties. These compounds share a hemiaminal-containing pyrrolizidinone core fused with a gamma-lactone, giving a furopyrrolizidine that is connected to a decalin fragment. The polyketide synthase module (PKS) of the PKS-NRPS ucsA is responsible for the synthesis of the polyketide backbone via the condensation of an acetyl-CoA starter unit with 6 malonyl-CoA units. The downstream nonribosomal peptide synthetase (NRPS) module then amidates the carboxyl end of the polyketide with a 2S,3S-methylproline derived from L-isoleucine by the 2-oxoglutarate-dependent dioxygenase ucsF which converts L-isoleucine to (4S,5S)-4-methylpyrroline-5-carboxylate that is further converted to 2S,3S-methylproline by the pyrroline-5-carboxylate reductase ucsG. Reductive release of the completed aminoacyl polyketide from the assembly line can form the 3-pyrrolin-2-one structure via an intramolecular Knoevenagel reaction. Because ucsA lacks a designated enoylreductase (ER) domain, the required activity is provided the enoyl reductase ucsL. This keto acyclic precursor is the substrate of the Diels-Alderase ucsH, that catalyzes the Diels-Alder cycloaddition. Oxidation of the 3S-methyl group to a carboxylate by the cytochrome P450 monooxygenase ucsK allows an oxa-Michael cyclization that might involve the reductase/dehydrogenase ucsI and which furnishes the furopyrrolizidine. The oxidase ucsJ likely plays a critical role in stereoselective reduction of the C5-C6 double bond to afford the required R-configured carboxylate group. Further enolization and oxidation at C5 by an unidentified enzyme affords the last intermediate that can undergo oxa-Michael cyclization to yield UCS1025A. In Acremonium sp, this protein is Cytochrome P450 monooxygenase ucsK.